The chain runs to 351 residues: 3-dehydroquinate synthase (351 aa).

NAD(+) is bound by residues Asp60 to Lys65, Gly94 to Asp98, Thr118 to Thr119, Lys131, Lys140, and Phe158 to Thr161. Zn(2+) is bound by residues Glu173, His239, and His256.

It belongs to the sugar phosphate cyclases superfamily. Dehydroquinate synthase family. Co(2+) serves as cofactor. Requires Zn(2+) as cofactor. The cofactor is NAD(+).

It is found in the cytoplasm. The catalysed reaction is 7-phospho-2-dehydro-3-deoxy-D-arabino-heptonate = 3-dehydroquinate + phosphate. Its pathway is metabolic intermediate biosynthesis; chorismate biosynthesis; chorismate from D-erythrose 4-phosphate and phosphoenolpyruvate: step 2/7. Functionally, catalyzes the conversion of 3-deoxy-D-arabino-heptulosonate 7-phosphate (DAHP) to dehydroquinate (DHQ). The protein is 3-dehydroquinate synthase of Campylobacter jejuni subsp. jejuni serotype O:23/36 (strain 81-176).